A 125-amino-acid chain; its full sequence is Small ribosomal subunit protein uS12 (125 aa).

3-methylthioaspartic acid is present on D89.

The protein belongs to the universal ribosomal protein uS12 family. In terms of assembly, part of the 30S ribosomal subunit. Contacts proteins S8 and S17. May interact with IF1 in the 30S initiation complex.

In terms of biological role, with S4 and S5 plays an important role in translational accuracy. Functionally, interacts with and stabilizes bases of the 16S rRNA that are involved in tRNA selection in the A site and with the mRNA backbone. Located at the interface of the 30S and 50S subunits, it traverses the body of the 30S subunit contacting proteins on the other side and probably holding the rRNA structure together. The combined cluster of proteins S8, S12 and S17 appears to hold together the shoulder and platform of the 30S subunit. The sequence is that of Small ribosomal subunit protein uS12 from Cupriavidus pinatubonensis (strain JMP 134 / LMG 1197) (Cupriavidus necator (strain JMP 134)).